Reading from the N-terminus, the 38-residue chain is Photosystem II reaction center protein Y (38 aa).

A helical transmembrane segment spans residues Ile2–Ile20.

Belongs to the PsbY family. As to quaternary structure, PSII is composed of 1 copy each of membrane proteins PsbA, PsbB, PsbC, PsbD, PsbE, PsbF, PsbH, PsbI, PsbJ, PsbK, PsbL, PsbM, PsbT, PsbX, PsbY, Psb30/Ycf12, peripheral proteins PsbO, CyanoQ (PsbQ), PsbU, PsbV and a large number of cofactors. It forms dimeric complexes.

The protein localises to the cellular thylakoid membrane. Functionally, loosely associated component of the core of photosystem II (PSII), it is not always seen in crystals. PSII is a light-driven water plastoquinone oxidoreductase, using light energy to abstract electrons from H(2)O, generating a proton gradient subsequently used for ATP formation. This chain is Photosystem II reaction center protein Y, found in Prochlorococcus marinus (strain MIT 9313).